A 243-amino-acid polypeptide reads, in one-letter code: MKHDLETLKHIIDSSNRITFFTGAGVSVASGVPDFRSMGGLFDEISKDGLSPEYLLSRDYLEDDPEGFINFCHKRLLFVDTMPNIVHDWIAKLERNQQSLGIITQNIDGLHSDAGSQHVDELHGTLNRFYCNVCHKSYTKSDVIDRTLKHCDNCGGAIRPDIVLYGEMLDQPTIIRALNKIEHADTLVVLGSSLVVQPAAGLISHFKGDNLIIINKDRTPYDSDATLVIHDDMVSVVKSLMTE.

A Deacetylase sirtuin-type domain is found at methionine 1–glutamate 243. The NAD(+) site is built by alanine 24, phenylalanine 35, arginine 36, glutamine 105, isoleucine 107, aspartate 108, and histidine 123. Phenylalanine 35 provides a ligand contact to nicotinamide. Residues isoleucine 107 and aspartate 108 each contribute to the nicotinamide site. The Proton acceptor role is filled by histidine 123. Residues cysteine 131, cysteine 134, cysteine 151, and cysteine 154 each coordinate Zn(2+). Residues serine 192, serine 193, asparagine 215, and aspartate 232 each coordinate NAD(+).

This sequence belongs to the sirtuin family. Class U subfamily. Zn(2+) serves as cofactor.

It is found in the cytoplasm. The catalysed reaction is N(6)-acetyl-L-lysyl-[protein] + NAD(+) + H2O = 2''-O-acetyl-ADP-D-ribose + nicotinamide + L-lysyl-[protein]. Its function is as follows. NAD-dependent protein deacetylase which modulates the activities of several enzymes which are inactive in their acetylated form. This chain is NAD-dependent protein deacetylase, found in Staphylococcus aureus (strain COL).